The primary structure comprises 178 residues: Crossover junction endodeoxyribonuclease RuvC (178 aa).

Catalysis depends on residues Asp-11, Glu-71, and Asp-143. Mg(2+) contacts are provided by Asp-11, Glu-71, and Asp-143.

It belongs to the RuvC family. In terms of assembly, homodimer which binds Holliday junction (HJ) DNA. The HJ becomes 2-fold symmetrical on binding to RuvC with unstacked arms; it has a different conformation from HJ DNA in complex with RuvA. In the full resolvosome a probable DNA-RuvA(4)-RuvB(12)-RuvC(2) complex forms which resolves the HJ. Mg(2+) is required as a cofactor.

It is found in the cytoplasm. It catalyses the reaction Endonucleolytic cleavage at a junction such as a reciprocal single-stranded crossover between two homologous DNA duplexes (Holliday junction).. In terms of biological role, the RuvA-RuvB-RuvC complex processes Holliday junction (HJ) DNA during genetic recombination and DNA repair. Endonuclease that resolves HJ intermediates. Cleaves cruciform DNA by making single-stranded nicks across the HJ at symmetrical positions within the homologous arms, yielding a 5'-phosphate and a 3'-hydroxyl group; requires a central core of homology in the junction. The consensus cleavage sequence is 5'-(A/T)TT(C/G)-3'. Cleavage occurs on the 3'-side of the TT dinucleotide at the point of strand exchange. HJ branch migration catalyzed by RuvA-RuvB allows RuvC to scan DNA until it finds its consensus sequence, where it cleaves and resolves the cruciform DNA. In Neisseria meningitidis serogroup B (strain ATCC BAA-335 / MC58), this protein is Crossover junction endodeoxyribonuclease RuvC.